The following is a 492-amino-acid chain: Aspartyl/glutamyl-tRNA(Asn/Gln) amidotransferase subunit B (492 aa).

This sequence belongs to the GatB/GatE family. GatB subfamily. Heterotrimer of A, B and C subunits.

It catalyses the reaction L-glutamyl-tRNA(Gln) + L-glutamine + ATP + H2O = L-glutaminyl-tRNA(Gln) + L-glutamate + ADP + phosphate + H(+). The catalysed reaction is L-aspartyl-tRNA(Asn) + L-glutamine + ATP + H2O = L-asparaginyl-tRNA(Asn) + L-glutamate + ADP + phosphate + 2 H(+). Its function is as follows. Allows the formation of correctly charged Asn-tRNA(Asn) or Gln-tRNA(Gln) through the transamidation of misacylated Asp-tRNA(Asn) or Glu-tRNA(Gln) in organisms which lack either or both of asparaginyl-tRNA or glutaminyl-tRNA synthetases. The reaction takes place in the presence of glutamine and ATP through an activated phospho-Asp-tRNA(Asn) or phospho-Glu-tRNA(Gln). The chain is Aspartyl/glutamyl-tRNA(Asn/Gln) amidotransferase subunit B from Pelagibacter ubique (strain HTCC1062).